The primary structure comprises 126 residues: Small ribosomal subunit protein uS13 (126 aa).

Residues 94 to 126 are disordered; it reads RNLPVHGQRTHTNARTRKGPRRAIAGKKKAGKK.

The protein belongs to the universal ribosomal protein uS13 family. As to quaternary structure, part of the 30S ribosomal subunit. Forms a loose heterodimer with protein S19. Forms two bridges to the 50S subunit in the 70S ribosome.

Located at the top of the head of the 30S subunit, it contacts several helices of the 16S rRNA. In the 70S ribosome it contacts the 23S rRNA (bridge B1a) and protein L5 of the 50S subunit (bridge B1b), connecting the 2 subunits; these bridges are implicated in subunit movement. Contacts the tRNAs in the A and P-sites. This chain is Small ribosomal subunit protein uS13, found in Parafrankia sp. (strain EAN1pec).